The sequence spans 179 residues: MHALRSSVLALWLCLHVSVRAWMTYRSANGLDEYEPEDRIIFLGTKWCGNGNVAEGPEDLGPLKETDACCREHDMCPDLIAAGQSKHGLTNTASYTRLNCGCDEKFYNCLKNSAETGSGAVRFTYFTVLGTKCYRNEHPLICVKKGWFSCSKYELDKSQPKRYQWFDVSSNFAFPRMLT.

The N-terminal stretch at 1 to 21 is a signal peptide; it reads MHALRSSVLALWLCLHVSVRA. Positions 22–39 are excised as a propeptide; the sequence is WMTYRSANGLDEYEPEDR. Ca(2+)-binding residues include Trp-47, Gly-49, and Gly-51. 5 disulfide bridges follow: Cys-48–Cys-70, Cys-69–Cys-109, Cys-76–Cys-102, Cys-100–Cys-133, and Cys-142–Cys-150. The active site involves His-73. Asp-74 serves as a coordination point for Ca(2+). The active site involves Asp-103.

It belongs to the phospholipase A2 family. Group III subfamily. The cofactor is Ca(2+). In terms of tissue distribution, expressed by the venom gland.

It localises to the secreted. The enzyme catalyses a 1,2-diacyl-sn-glycero-3-phosphocholine + H2O = a 1-acyl-sn-glycero-3-phosphocholine + a fatty acid + H(+). Functionally, may potentiate Xylotoxin(1)-Xa1a DRG activation and cell lysis, since the orthologous A.mellifera PA2 potentiates Xylotoxin(1)-Xa1a DRG activation and cell lysis. In vivo, intraplantar injection in mice may potentiate spontaneous pain behaviors and paw swelling caused by Xylotoxin(1)-Xa1a, since the orthologous A.mellifera PA2 shows this effect. PLA2 catalyzes the calcium-dependent hydrolysis of the 2-acyl groups in 3-sn-phosphoglycerides. The protein is Phospholipase A2 of Xylocopa aruana (Great carpenter bee).